We begin with the raw amino-acid sequence, 127 residues long: Small ribosomal subunit protein uS11 (127 aa).

Belongs to the universal ribosomal protein uS11 family. In terms of assembly, part of the 30S ribosomal subunit. Interacts with proteins S7 and S18. Binds to IF-3.

Its function is as follows. Located on the platform of the 30S subunit, it bridges several disparate RNA helices of the 16S rRNA. Forms part of the Shine-Dalgarno cleft in the 70S ribosome. The chain is Small ribosomal subunit protein uS11 from Lactococcus lactis subsp. lactis (strain IL1403) (Streptococcus lactis).